The sequence spans 62 residues: Large ribosomal subunit protein bL28 (62 aa).

This sequence belongs to the bacterial ribosomal protein bL28 family.

The chain is Large ribosomal subunit protein bL28 from Helicobacter pylori (strain P12).